A 415-amino-acid polypeptide reads, in one-letter code: G2/mitotic-specific cyclin cig1 (415 aa).

Disordered regions lie at residues 54–74 (PTLI…DTFE) and 86–118 (EERS…ILTH). Over residues 57-71 (IEGNNESSISSSTGD) the composition is skewed to low complexity. Residue S96 is modified to Phosphoserine.

Belongs to the cyclin family. Cyclin G subfamily.

Its function is as follows. Required for efficient passage of the G1/S transition. The sequence is that of G2/mitotic-specific cyclin cig1 (cig1) from Schizosaccharomyces pombe (strain 972 / ATCC 24843) (Fission yeast).